The sequence spans 90 residues: UPF0297 protein ABC1593 (90 aa).

The protein belongs to the UPF0297 family.

This is UPF0297 protein ABC1593 from Shouchella clausii (strain KSM-K16) (Alkalihalobacillus clausii).